The primary structure comprises 368 residues: Chaperone protein DnaJ (368 aa).

The J domain occupies Asp5 to Gly69. The CR-type zinc-finger motif lies at Gly130–Arg212. The Zn(2+) site is built by Cys143, Cys146, Cys160, Cys163, Cys186, Cys189, Cys200, and Cys203. CXXCXGXG motif repeat units lie at residues Cys143–Gly150, Cys160–Gly167, Cys186–Gly193, and Cys200–Gly207.

Belongs to the DnaJ family. Homodimer. Requires Zn(2+) as cofactor.

It localises to the cytoplasm. In terms of biological role, participates actively in the response to hyperosmotic and heat shock by preventing the aggregation of stress-denatured proteins and by disaggregating proteins, also in an autonomous, DnaK-independent fashion. Unfolded proteins bind initially to DnaJ; upon interaction with the DnaJ-bound protein, DnaK hydrolyzes its bound ATP, resulting in the formation of a stable complex. GrpE releases ADP from DnaK; ATP binding to DnaK triggers the release of the substrate protein, thus completing the reaction cycle. Several rounds of ATP-dependent interactions between DnaJ, DnaK and GrpE are required for fully efficient folding. Also involved, together with DnaK and GrpE, in the DNA replication of plasmids through activation of initiation proteins. This chain is Chaperone protein DnaJ, found in Bacillus mycoides (strain KBAB4) (Bacillus weihenstephanensis).